The sequence spans 455 residues: C4-dicarboxylate transport protein (455 aa).

Helical transmembrane passes span 20-40 (HLYFQVLCAIVAGALIGHFYP), 59-79 (MIIAPVIFLTIVTGLAGMGTL), 91-111 (GYFLTFSTLALVVGLITANVI), 160-180 (GNILQVLFVAILFGIGLILIG), 209-229 (PIGAFGAFAFTIGKYGIASVV), 231-251 (LATLVGTFYLTSALFVIVVLG), 344-364 (LLLVAMLSSKGAAGVTGAGFI), and 367-387 (AATLSVVPTVPVAGMALILGV).

The protein belongs to the dicarboxylate/amino acid:cation symporter (DAACS) (TC 2.A.23) family.

It is found in the cell inner membrane. Functionally, responsible for the transport of dicarboxylates such as succinate, fumarate, and malate from the periplasm across the membrane. The sequence is that of C4-dicarboxylate transport protein from Paracoccus denitrificans (strain Pd 1222).